The primary structure comprises 364 residues: Dihydroorotate dehydrogenase (quinone) (364 aa).

Residues 61 to 65 (AGYDK) and Thr85 each bind FMN. Substrate is bound at residue Lys65. 110–114 (NRLGF) is a binding site for substrate. Positions 139 and 170 each coordinate FMN. Residue Asn170 coordinates substrate. Catalysis depends on Ser173, which acts as the Nucleophile. Asn175 provides a ligand contact to substrate. FMN is bound by residues Lys215 and Ser243. 244 to 245 (NT) serves as a coordination point for substrate. Residues Gly266, Gly295, and 316–317 (YT) contribute to the FMN site.

The protein belongs to the dihydroorotate dehydrogenase family. Type 2 subfamily. As to quaternary structure, monomer. Requires FMN as cofactor.

It localises to the cell membrane. The catalysed reaction is (S)-dihydroorotate + a quinone = orotate + a quinol. The protein operates within pyrimidine metabolism; UMP biosynthesis via de novo pathway; orotate from (S)-dihydroorotate (quinone route): step 1/1. In terms of biological role, catalyzes the conversion of dihydroorotate to orotate with quinone as electron acceptor. The polypeptide is Dihydroorotate dehydrogenase (quinone) (Brucella canis (strain ATCC 23365 / NCTC 10854 / RM-666)).